A 270-amino-acid chain; its full sequence is Type III pantothenate kinase (270 aa).

6 to 13 provides a ligand contact to ATP; it reads DVRNTHTV. Substrate is bound at residue 109–112; it reads GADR. Asp-111 (proton acceptor) is an active-site residue. Asp-131 serves as a coordination point for K(+). Ser-134 serves as a coordination point for ATP. A substrate-binding site is contributed by Thr-186.

This sequence belongs to the type III pantothenate kinase family. As to quaternary structure, homodimer. Requires NH4(+) as cofactor. K(+) serves as cofactor.

The protein resides in the cytoplasm. It catalyses the reaction (R)-pantothenate + ATP = (R)-4'-phosphopantothenate + ADP + H(+). The protein operates within cofactor biosynthesis; coenzyme A biosynthesis; CoA from (R)-pantothenate: step 1/5. In terms of biological role, catalyzes the phosphorylation of pantothenate (Pan), the first step in CoA biosynthesis. The chain is Type III pantothenate kinase from Mycolicibacterium gilvum (strain PYR-GCK) (Mycobacterium gilvum (strain PYR-GCK)).